Reading from the N-terminus, the 262-residue chain is 3-deoxy-manno-octulosonate cytidylyltransferase (262 aa).

Belongs to the KdsB family.

Its subcellular location is the cytoplasm. It carries out the reaction 3-deoxy-alpha-D-manno-oct-2-ulosonate + CTP = CMP-3-deoxy-beta-D-manno-octulosonate + diphosphate. Its pathway is nucleotide-sugar biosynthesis; CMP-3-deoxy-D-manno-octulosonate biosynthesis; CMP-3-deoxy-D-manno-octulosonate from 3-deoxy-D-manno-octulosonate and CTP: step 1/1. It participates in bacterial outer membrane biogenesis; lipopolysaccharide biosynthesis. Functionally, activates KDO (a required 8-carbon sugar) for incorporation into bacterial lipopolysaccharide in Gram-negative bacteria. The sequence is that of 3-deoxy-manno-octulosonate cytidylyltransferase from Acidovorax sp. (strain JS42).